Reading from the N-terminus, the 467-residue chain is Argininosuccinate lyase (467 aa).

It belongs to the lyase 1 family. Argininosuccinate lyase subfamily.

It is found in the cytoplasm. The enzyme catalyses 2-(N(omega)-L-arginino)succinate = fumarate + L-arginine. It participates in amino-acid biosynthesis; L-arginine biosynthesis; L-arginine from L-ornithine and carbamoyl phosphate: step 3/3. The sequence is that of Argininosuccinate lyase from Sinorhizobium fredii (strain NBRC 101917 / NGR234).